A 456-amino-acid polypeptide reads, in one-letter code: Serine/threonine-protein kinase meng-po (456 aa).

A disordered region spans residues 15-78; sequence RSFGDGGSTN…RSSIYKKPDK (64 aa). Over residues 22–55 the composition is skewed to low complexity; it reads STNSRNSNNNSSTCTNHNNQKRCSTPLTPTSTST. The Protein kinase domain maps to 101–367; sequence YNIEKTLAEG…VAKYMKDRWV (267 aa). Residues 107 to 115 and K130 each bind ATP; that span reads LAEGCFAKI. The active-site Proton acceptor is the D221. S334 bears the Phosphoserine; by PKA mark.

This sequence belongs to the protein kinase superfamily. Ser/Thr protein kinase family. It depends on Mg(2+) as a cofactor. As to expression, expressed in the mushroom bodies (at protein level).

The catalysed reaction is L-seryl-[protein] + ATP = O-phospho-L-seryl-[protein] + ADP + H(+). It catalyses the reaction L-threonyl-[protein] + ATP = O-phospho-L-threonyl-[protein] + ADP + H(+). With respect to regulation, activated by Pka-C1-mediated phosphorylation of Ser-334. Functionally, serine/threonine-protein kinase involved in memory formation. Together with the cAMP-dependent protein kinase A Pka-C1, promotes long-term memory (LTM) by regulating CrebB stability and activity. Involved in the maintenance of anesthesia-sensitive memory (ASM) which includes short-term memory (STM) and middle-term memory (MTM). This Drosophila melanogaster (Fruit fly) protein is Serine/threonine-protein kinase meng-po.